The primary structure comprises 317 residues: Melanocyte-stimulating hormone receptor (317 aa).

The Extracellular portion of the chain corresponds to methionine 1–glutamate 37. A glycan (N-linked (GlcNAc...) asparagine) is linked at asparagine 29. The helical transmembrane segment at valine 38–isoleucine 63 threads the bilayer. Residues alanine 64–proline 72 are Cytoplasmic-facing. The helical transmembrane segment at methionine 73 to leucine 93 threads the bilayer. The Extracellular segment spans residues glutamate 94–asparagine 118. A helical transmembrane segment spans residues valine 119 to valine 140. Topologically, residues aspartate 141–arginine 163 are cytoplasmic. A helical transmembrane segment spans residues isoleucine 164–tyrosine 183. Residues asparagine 184–cysteine 191 are Extracellular-facing. A helical membrane pass occupies residues leucine 192–leucine 211. Residues alanine 212–alanine 240 lie on the Cytoplasmic side of the membrane. The helical transmembrane segment at alanine 241–leucine 266 threads the bilayer. Residues cysteine 267–asparagine 279 lie on the Extracellular side of the membrane. Residues phenylalanine 280–phenylalanine 300 form a helical membrane-spanning segment. Residues arginine 301–tryptophan 317 are Cytoplasmic-facing. Cysteine 315 carries S-palmitoyl cysteine lipidation.

It belongs to the G-protein coupled receptor 1 family. Interacts with MGRN1, but does not undergo MGRN1-mediated ubiquitination; this interaction competes with GNAS-binding and thus inhibits agonist-induced cAMP production. Interacts with OPN3; the interaction results in a decrease in MC1R-mediated cAMP signaling and ultimately a decrease in melanin production in melanocytes.

The protein localises to the cell membrane. Functionally, receptor for MSH (alpha, beta and gamma) and ACTH. The activity of this receptor is mediated by G proteins which activate adenylate cyclase. Mediates melanogenesis, the production of eumelanin (black/brown) and phaeomelanin (red/yellow), via regulation of cAMP signaling in melanocytes. In Rangifer tarandus (Reindeer), this protein is Melanocyte-stimulating hormone receptor (MC1R).